The primary structure comprises 172 residues: Type VI secretion system sheath protein TssB1 (172 aa).

As to quaternary structure, forms a heterodimer with TssC1. Heterodimers assemble to form the sheath of the T6SS machinery. Interacts with TagJ. Interacts with TssA1.

Functionally, core component of the H1 type VI (H1-T6SS) secretion system that plays a role in the release of toxins targeting both eukaryotic and prokaryotic species. Forms the sheath of the structure by assembling into tubules together with TssC1 resulting in the stacking of cogwheel-like structures showing predominantly a 12-fold symmetry. The sheath contracts to provide the energy needed for effector delivery. The polypeptide is Type VI secretion system sheath protein TssB1 (Pseudomonas aeruginosa (strain ATCC 15692 / DSM 22644 / CIP 104116 / JCM 14847 / LMG 12228 / 1C / PRS 101 / PAO1)).